The following is a 154-amino-acid chain: Snaclec EMS16 subunit beta (154 aa).

Positions 1–26 are cleaved as a signal peptide; the sequence is MGRLISVRFSLLVVFLSLSGIGAGLC. A disulfide bridge links C27 with C38. Residues 34–147 enclose the C-type lectin domain; the sequence is FDQHCYKVFE…CEKSVSFVCK (114 aa). Residue N47 is glycosylated (N-linked (GlcNAc...) asparagine). Cystine bridges form between C55-C146 and C121-C138.

This sequence belongs to the snaclec family. Heterodimer of subunits A and B; disulfide-linked. Expressed by the venom gland.

The protein resides in the secreted. EMS16 is a potent and selective inhibitor of alpha-2/beta-1 (ITGA2/ITGB1) integrin and acts as a potent antagonist of platelet aggregation and cell migration. Binds specifically to the I domain of the alpha-2 subunit, in a metal ion-independent fashion. This Echis multisquamatus (Central Asian sand viper) protein is Snaclec EMS16 subunit beta.